Consider the following 359-residue polypeptide: G-protein coupled receptor 15 (359 aa).

The Extracellular segment spans residues 1–33 (MDPEETSVYLDYYYATSPNPDIRETHSHVPYTS). Residues 34–54 (VFLPVFYTAVFLTGVLGNLVL) traverse the membrane as a helical segment. Residues 55-69 (MGALHFKPGSRRLID) are Cytoplasmic-facing. Residues 70-90 (IFIINLAASDFIFLVTLPLWV) traverse the membrane as a helical segment. Topologically, residues 91–120 (DKEASLGLWRTGSFLCKGSSYMISVNMHCS) are extracellular. A helical transmembrane segment spans residues 121–141 (VFLLTCMSVDRYLAIVCPVVS). At 142 to 149 (RKFRRTDC) the chain is on the cytoplasmic side. Residues 150 to 170 (AYVVCASIWFISCLLGLPTLL) traverse the membrane as a helical segment. The Extracellular segment spans residues 171–192 (SRELTLIDDKPYCAEKKATPLK). A helical transmembrane segment spans residues 193 to 213 (LIWSLVALIFTFFVPLLNIVT). Residues 214–239 (CYCCIARKLCAHYQQSGRHNKKLKKS) lie on the Cytoplasmic side of the membrane. Residues 240 to 260 (IKIILIVVAAFLVSWLPFNTF) form a helical membrane-spanning segment. Residues 261–283 (KLLAIVSGLQERYFPSAMLQLGM) lie on the Extracellular side of the membrane. The helical transmembrane segment at 284 to 304 (EVSGPLAFANSCVNPFIYYIF) threads the bilayer. The Cytoplasmic segment spans residues 305-359 (DSYIRRAIVHCLCPCLKNYDFGSSTETSDSHLTKALSTFIHAEDFTRRRKRSVSL). Ser-358 carries the post-translational modification Phosphoserine.

The protein belongs to the G-protein coupled receptor 1 family. In terms of assembly, interacts with adapter YWHAE; this interaction promotes ER-to-Golgi transport of GPR15. Phosphorylation is necessary for YWHAE binding and efficient surface expression. In terms of processing, O-glycosylated. Sialylated O-glycans in the N-terminal tail inhibits binding of GPR15LG. Post-translationally, sulfation is required for efficient binding of GPR15LG.

The protein resides in the cell membrane. Its function is as follows. G protein-coupled receptor that plays an important role in immune homeostasis. Acts via its natural ligand GPR15LG, a chemokine-like polypeptide strongly expressed in gastrointestinal tissues. GPR15-GPR15LG signaling axis regulates intestinal homeostasis and inflammation through the migration of immune cells. Controls thereby the specific homing of T-cells, particularly FOXP3+ regulatory T-cells (Tregs), to the large intestine lamina propria. Also required for skin localization of thymus-derived dendritic epidermal T-cells. Plays an important role in mediating cytoprotective function as well as angiogenesis of thrombomodulin. Mechanistically, preferentially signals through the Gi/o pathway to inhibit adenylate cyclase activity and activate a phosphatidylinositol-calcium second messenger system that regulates the release of Ca(2+) ions from intracellular stores. This Macaca fascicularis (Crab-eating macaque) protein is G-protein coupled receptor 15 (GPR15).